We begin with the raw amino-acid sequence, 964 residues long: Pumilio homolog 3 (964 aa).

A disordered region spans residues 1-22 (MMIPELGRRPMHRGNEDSSFGD). Residue S192 is modified to Phosphoserine. 3 disordered regions span residues 204–235 (PVVQ…ASQG), 256–300 (GTPD…TSGL), and 343–388 (DGHN…VANP). Composition is skewed to polar residues over residues 207–216 (QQPSRPASRN) and 223–234 (DSNNNLSPSASQ). Phosphothreonine is present on T257. Polar residues-rich tracts occupy residues 287–300 (TSNQ…TSGL) and 356–384 (RSDQ…SGSG). One can recognise a PUM-HD domain in the interval 606–946 (FGSSMLEEFK…HIVARVEKLV (341 aa)). Pumilio repeat units lie at residues 626 to 661 (EIAG…MVYE), 662 to 697 (EIMP…ELGE), 698 to 733 (KLID…QMVK), 734 to 769 (ELDG…FIIS), 770 to 806 (TFFG…KVME), 807 to 842 (EILS…VIIK), 843 to 878 (ELAG…LLVN), and 879 to 920 (EMLG…LILT).

The protein resides in the cytoplasm. Sequence-specific RNA-binding protein that regulates translation and mRNA stability by binding the 3'-UTR of target mRNAs. Binds the APUM-binding elements (APBEs) in the 3'-UTR mRNA sequence of CLV1, PNH, WUS and FAS2. This chain is Pumilio homolog 3 (APUM3), found in Arabidopsis thaliana (Mouse-ear cress).